The sequence spans 391 residues: Deoxyguanosinetriphosphate triphosphohydrolase-like protein (391 aa).

In terms of domain architecture, HD spans Arg62 to Ile198.

This sequence belongs to the dGTPase family. Type 2 subfamily.

The chain is Deoxyguanosinetriphosphate triphosphohydrolase-like protein from Rickettsia akari (strain Hartford).